The chain runs to 367 residues: Inhibin alpha chain (367 aa).

A signal peptide spans 1–20 (MVPPLPLLLLLLLVPQGGHG). The propeptide occupies 21 to 63 (CQGSELDREIVLAKVRALFLDALGPPAVTGEGGDPGVRRLPRR). Residues 64-233 (HALGGFARRG…PPSGGERTRR (170 aa)) constitute a propeptide, inhibin alpha N-terminal region. Asn147 and Asn269 each carry an N-linked (GlcNAc...) asparagine glycan. Disulfide bonds link Cys263–Cys329, Cys292–Cys364, and Cys296–Cys366.

This sequence belongs to the TGF-beta family. As to quaternary structure, dimeric, linked by one or more disulfide bonds. Activin B is a dimer of alpha and beta-B. Inhibin A is a dimer of alpha and beta-A. Inhibin B is a dimer of alpha and beta-B. Interacts with TGFBR3L; this interaction regulates female fertility. Proteolytic processing yields a number of bioactive forms, consisting either solely of the mature alpha chain, of the most N-terminal propeptide linked through a disulfide bond to the mature alpha chain, or of the entire proprotein.

The protein localises to the secreted. Its function is as follows. Inhibins and activins inhibit and activate, respectively, the secretion of follitropin by the pituitary gland. Inhibins/activins are involved in regulating a number of diverse functions such as hypothalamic and pituitary hormone secretion, gonadal hormone secretion, germ cell development and maturation, erythroid differentiation, insulin secretion, nerve cell survival, embryonic axial development or bone growth, depending on their subunit composition. Inhibins appear to oppose the functions of activins. Functionally, inhibin A is a dimer of alpha/INHA and beta-A/INHBA that functions as a feedback regulator in the hypothalamic-pituitary-gonadal (HPG) axis. Inhibits the secretion of FSH from the anterior pituitary gland by acting on pituitary gonadotrope cells. Antagonizes activin A by binding to the proteoglycan, betaglycan, and forming a stable complex with and, thereby, sequestering type II activin receptors while excluding type I receptor. Inhibin B is a dimer of alpha and beta-B that plays a crucial role in the regulation of the reproductive system by inhibiting the secretion of follicle-stimulating hormone (FSH) from the anterior pituitary gland. Thereby, maintains reproductive homeostasis in both males and females. Acts as a more potent suppressor of FSH release than inhibin A. Functions as competitive receptor antagonist binding activin type II receptors with high affinity in the presence of the TGF-beta type III coreceptor/TGFBR3L. In Equus caballus (Horse), this protein is Inhibin alpha chain (INHA).